The following is a 185-amino-acid chain: RING-H2 finger protein ATL8 (185 aa).

A helical membrane pass occupies residues 28–48; that stretch reads LVLILAVLLCALTCIIGLIAV. The RING-type; atypical zinc-finger motif lies at 104-146; sequence CAICLTEFAAGDELRVLPQCGHGFHVSCIDTWLGSHSSCPSCR. The interval 161 to 185 is disordered; sequence PGSSSSGPEPDTRIKQREDGPDNLP. Positions 170–185 are enriched in basic and acidic residues; that stretch reads PDTRIKQREDGPDNLP.

It belongs to the RING-type zinc finger family. ATL subfamily.

The protein resides in the membrane. The catalysed reaction is S-ubiquitinyl-[E2 ubiquitin-conjugating enzyme]-L-cysteine + [acceptor protein]-L-lysine = [E2 ubiquitin-conjugating enzyme]-L-cysteine + N(6)-ubiquitinyl-[acceptor protein]-L-lysine.. The protein operates within protein modification; protein ubiquitination. The chain is RING-H2 finger protein ATL8 (ATL8) from Arabidopsis thaliana (Mouse-ear cress).